The chain runs to 957 residues: MTLLLVSLLLASLLQISSGNKANKHKPWIEAEYQGIVMENDNTVLLNPPLFALDKDAPLRYAGEICGFRLHGSGVPFKAVILDKATGEGLIRAKEPVDCEAQKEHTFTTQAYDCVDGPDGANTKKSHKATVHVRVNDVNEFAPVFVERLYRAAVTEGKLYDRILRVEAIDGDCSPQYSQICYYEILTPNTPFLIDNDGNIENTEKLQYSGEKLYKFTVTAYDCGKKRAADDAEVEIQVKPTCKPSWQGWNKRIEYAPGAGSLALFPGIRLETCDEPLWNIQATIELQTSHVAKGCDRDNYSERALRKLCGAATGEVDLLPMPGPNANWTAGLSVHYSQDSSLIYWFNGTQAVQVPLGGPAGLGSGPQDGLSDHFTLSFWMKHSVTPSKGKKEEETIVCNTIQNEDGYSHYSLTVHGCRIAFLYWPLLESARPVKFLWKLEQVCDDEWHHYALNLEFPTVTLYTDGISFDPALIHDNGLIHPPRREPALMIGACWSEEKNKEKEKGGENSTDTTSGDPLPIHHYFHGYLAGFSVRSGRLESREVIECLYACREGLDYRDFESLGKGMKVHVNPSQSLLTLEGDDVETFNHALQHVAYMNTLRFATPGVRPLRLTTAVKCFSEESCVSIPEVEGYVVVLQPDAPQILLSGTAHFARPAVDFEGPEGVPLFPDLQITCSISHQVEAKADESWQGTVTDTRMSDEIVHNLDGCEISLVGDDLDPERESLLLDMASLQQRGLELTNRSAYLTIAGVETITVYEEILRQARYQLRHGAALYARKFRLSCSEMNGRYSSNEFIVEVNVLHSMNRVAHPSHVLSSQQFLHRGHQPPPEMAGHSLASSHRNSMVPSAATLIIVVCVGFLVLMVILGLVRIHSLHRRVSGTGGPSGASADPKDPDLFWDDSALTIIVNPMESYQNQQTGVAGVAGGQQEEEDSSDSEAADSPSSDERRIIESPPHRY.

The signal sequence occupies residues 1 to 19 (MTLLLVSLLLASLLQISSG). The Cytoplasmic portion of the chain corresponds to 1-21 (MTLLLVSLLLASLLQISSGNK). Topologically, residues 20 to 848 (NKANKHKPWI…SHRNSMVPSA (829 aa)) are extracellular. Positions 22 to 42 (ANKHKPWIEAEYQGIVMENDN) form an intramembrane region, helical. 2 consecutive Cadherin domains span residues 29–145 (IEAE…APVF) and 146–246 (VERL…KPSW). Residues 43-73 (TVLLNPPLFALDKDAPLRYAGEICGFRLHGS) lie on the Cytoplasmic side of the membrane. The segment at residues 74–94 (GVPFKAVILDKATGEGLIRAK) is an intramembrane region (helical). Residues 95-139 (EPVDCEAQKEHTFTTQAYDCVDGPDGANTKKSHKATVHVRVNDVN) lie on the Cytoplasmic side of the membrane. Residues 140 to 160 (EFAPVFVERLYRAAVTEGKLY) constitute an intramembrane region (helical). The Cytoplasmic segment spans residues 161–248 (DRILRVEAID…KPTCKPSWQG (88 aa)). A helical transmembrane segment spans residues 249–269 (WNKRIEYAPGAGSLALFPGIR). Over 270–357 (LETCDEPLWN…GTQAVQVPLG (88 aa)) the chain is Lumenal. N-linked (GlcNAc...) asparagine glycosylation is found at N299, N327, N347, N508, and N741. A helical transmembrane segment spans residues 849–869 (ATLIIVVCVGFLVLMVILGLV). The Cytoplasmic segment spans residues 870–957 (RIHSLHRRVS…RIIESPPHRY (88 aa)). The interval 916–957 (QQTGVAGVAGGQQEEEDSSDSEAADSPSSDERRIIESPPHRY) is disordered. Acidic residues predominate over residues 928 to 938 (QEEEDSSDSEA). Residues 944 to 957 (SDERRIIESPPHRY) are compositionally biased toward basic and acidic residues.

The protein belongs to the calsyntenin family. In terms of assembly, interacts (via cadherin domains) with both alpha and beta isoforms of neurexins (NRXN1, NRXN2 and NRXN3). Directly interacts with APBA2. Forms a tripartite complex with APBA2 and APP. Interacts with low affinity with KLC1. Interacts with SLC23A2/SVCT2. Interacts with CIDEA; inhibiting the lipid transferase activity of CIDEA. Interacts with CIDEC; inhibiting the lipid transferase activity of CIDEC. In terms of processing, proteolytically processed under normal cellular conditions. A primary zeta-cleavage generates a large extracellular (soluble) N-terminal domain (sAlc) and a short C-terminal transmembrane fragment (CTF1). A secondary cleavage catalyzed by gamma-secretase within the transmembrane domain releases the beta-Alc-beta chain in the extracellular milieu and produces an intracellular fragment (AlcICD). This processing is strongly suppressed in the tripartite complex formed with APBA2 and APP, which seems to prevent the association with gamma-secretase. Post-translationally, ubiquitinated: endoplasmic reticulum-localized protein is ubiquitinated and degraded by the endoplasmic reticulum-associated degradation (ERAD) pathway.

It localises to the postsynaptic cell membrane. Its subcellular location is the endoplasmic reticulum membrane. It is found in the golgi apparatus membrane. The protein localises to the cell projection. The protein resides in the dendrite. It localises to the lipid droplet. In terms of biological role, postsynaptic adhesion molecule that binds to presynaptic neurexins to mediate both excitatory and inhibitory synapse formation. Promotes synapse development by acting as a cell adhesion molecule at the postsynaptic membrane, which associates with both neurexin-alpha and neurexin-beta proteins at the presynaptic membrane. Regulates the balance between excitatory and inhibitory synapses by inhibiting formation of excitatory parallel-fiber synapses and promoting formation of inhibitory synapses in the same neuron. May also be involved in ascorbate (vitamin C) uptake via its interaction with SLC23A2/SVCT2. Complex formation with APBA2 and APP, stabilizes APP metabolism and enhances APBA2-mediated suppression of beta-APP40 secretion, due to the retardation of intracellular APP maturation. Functionally, adipose-specific isoform that plays a key role in adaptive thermogenesis. Facilitates the efficient use of stored triglyceride by promoting multilocular morphology of thermogenic adipocytes: acts by inhibiting the activity of CIDEA and CIDEC on lipid droplets, thereby preventing lipid droplet fusion and facilitating lipid utilization. May also participate in adaptive thermogenesis by promoting sympathetic innervation of thermogenic adipose tissue: acts by driving secretion of neurotrophic factor S100B from brown adipocytes, stimulating neurite outgrowth from sympathetic neurons. In Rattus norvegicus (Rat), this protein is Calsyntenin-3.